Reading from the N-terminus, the 154-residue chain is Large ribosomal subunit protein uL13 (154 aa).

This sequence belongs to the universal ribosomal protein uL13 family. Part of the 50S ribosomal subunit.

In terms of biological role, this protein is one of the early assembly proteins of the 50S ribosomal subunit, although it is not seen to bind rRNA by itself. It is important during the early stages of 50S assembly. This Allorhizobium ampelinum (strain ATCC BAA-846 / DSM 112012 / S4) (Agrobacterium vitis (strain S4)) protein is Large ribosomal subunit protein uL13.